The following is a 134-amino-acid chain: Putative nickel-responsive regulator (134 aa).

The Ni(2+) site is built by His78, His89, His91, and Cys97.

The protein belongs to the transcriptional regulatory CopG/NikR family. Ni(2+) serves as cofactor.

In terms of biological role, transcriptional regulator. The sequence is that of Putative nickel-responsive regulator from Chlorobium phaeobacteroides (strain DSM 266 / SMG 266 / 2430).